We begin with the raw amino-acid sequence, 114 residues long: Ribonuclease U2 (114 aa).

3 disulfides stabilise this stretch: C1–C54, C9–C113, and C55–C96. Residues D29, V30, A31, N32, D37, and Y39 each coordinate Ca(2+). Substrate is bound at residue 39 to 49; the sequence is YPHQYYDEASE. H41 is a catalytic residue. The active-site Proton acceptor is E62. A substrate-binding site is contributed by R85. Residue H101 is the Proton donor of the active site. Substrate is bound at residue 108–110; that stretch reads DGF.

This sequence belongs to the ribonuclease U2 family.

It catalyses the reaction [RNA] containing adenosine + H2O = an [RNA fragment]-3'-adenosine-3'-phosphate + a 5'-hydroxy-ribonucleotide-3'-[RNA fragment].. It carries out the reaction [RNA] containing guanosine + H2O = an [RNA fragment]-3'-guanosine-3'-phosphate + a 5'-hydroxy-ribonucleotide-3'-[RNA fragment].. The polypeptide is Ribonuclease U2 (RNU2) (Ustilago sphaerogena (Smut fungus)).